The sequence spans 361 residues: Phosphoserine aminotransferase (361 aa).

Arg43 contacts L-glutamate. Residues 77 to 78 (AS), Trp103, Thr153, Asp173, and Gln196 each bind pyridoxal 5'-phosphate. Position 197 is an N6-(pyridoxal phosphate)lysine (Lys197). 238-239 (NT) provides a ligand contact to pyridoxal 5'-phosphate.

It belongs to the class-V pyridoxal-phosphate-dependent aminotransferase family. SerC subfamily. Homodimer. The cofactor is pyridoxal 5'-phosphate.

The protein localises to the cytoplasm. The enzyme catalyses O-phospho-L-serine + 2-oxoglutarate = 3-phosphooxypyruvate + L-glutamate. It catalyses the reaction 4-(phosphooxy)-L-threonine + 2-oxoglutarate = (R)-3-hydroxy-2-oxo-4-phosphooxybutanoate + L-glutamate. It participates in amino-acid biosynthesis; L-serine biosynthesis; L-serine from 3-phospho-D-glycerate: step 2/3. It functions in the pathway cofactor biosynthesis; pyridoxine 5'-phosphate biosynthesis; pyridoxine 5'-phosphate from D-erythrose 4-phosphate: step 3/5. Functionally, catalyzes the reversible conversion of 3-phosphohydroxypyruvate to phosphoserine and of 3-hydroxy-2-oxo-4-phosphonooxybutanoate to phosphohydroxythreonine. The sequence is that of Phosphoserine aminotransferase from Pseudomonas aeruginosa (strain ATCC 15692 / DSM 22644 / CIP 104116 / JCM 14847 / LMG 12228 / 1C / PRS 101 / PAO1).